Here is a 357-residue protein sequence, read N- to C-terminus: Peptide chain release factor 1 (357 aa).

Q235 is subject to N5-methylglutamine. A compositionally biased stretch (basic and acidic residues) spans 282–294; it reads RQKADTERSESRR. Positions 282–308 are disordered; that stretch reads RQKADTERSESRRSQVGSGDRSERIRT.

This sequence belongs to the prokaryotic/mitochondrial release factor family. In terms of processing, methylated by PrmC. Methylation increases the termination efficiency of RF1.

Its subcellular location is the cytoplasm. Its function is as follows. Peptide chain release factor 1 directs the termination of translation in response to the peptide chain termination codons UAG and UAA. The polypeptide is Peptide chain release factor 1 (Brucella anthropi (strain ATCC 49188 / DSM 6882 / CCUG 24695 / JCM 21032 / LMG 3331 / NBRC 15819 / NCTC 12168 / Alc 37) (Ochrobactrum anthropi)).